We begin with the raw amino-acid sequence, 90 residues long: Large ribosomal subunit protein eL34 (90 aa).

Residues C36, C39, C72, and C75 each coordinate Zn(2+). The disordered stretch occupies residues 41–72 (RPLNGVPRGRPSELRKLPKTKKRPERPYPNLC).

It belongs to the eukaryotic ribosomal protein eL34 family. As to quaternary structure, part of the 50S ribosomal subunit. The cofactor is Zn(2+).

In Thermococcus kodakarensis (strain ATCC BAA-918 / JCM 12380 / KOD1) (Pyrococcus kodakaraensis (strain KOD1)), this protein is Large ribosomal subunit protein eL34.